Consider the following 61-residue polypeptide: Small venom protein 1 (61 aa).

The N-terminal stretch at 1 to 20 is a signal peptide; it reads MRCVAIFLVVICAFVLQALA.

As to expression, expressed by the venom gland.

The protein resides in the secreted. The chain is Small venom protein 1 from Pimpla hypochondriaca (Parasitoid wasp).